The chain runs to 608 residues: AAA ATPase forming ring-shaped complexes (608 aa).

Positions 45-79 (AQEYDAVLRRLSAAEATRDNMSRQIRGAGEKNRKL) form a coiled coil. 302 to 307 (GNGKTM) lines the ATP pocket.

Belongs to the AAA ATPase family. As to quaternary structure, homohexamer. Assembles into a hexameric ring structure.

The protein is AAA ATPase forming ring-shaped complexes of Rothia mucilaginosa (strain DY-18) (Stomatococcus mucilaginosus).